We begin with the raw amino-acid sequence, 937 residues long: Isoleucine--tRNA ligase (937 aa).

Positions 58–68 match the 'HIGH' region motif; it reads PYANGNIHIGH. L-isoleucyl-5'-AMP is bound at residue glutamate 560. A 'KMSKS' region motif is present at residues 601-605; the sequence is KMSKS. Position 604 (lysine 604) interacts with ATP. Residues cysteine 900, cysteine 903, cysteine 920, and cysteine 923 each coordinate Zn(2+).

The protein belongs to the class-I aminoacyl-tRNA synthetase family. IleS type 1 subfamily. As to quaternary structure, monomer. Zn(2+) is required as a cofactor.

The protein localises to the cytoplasm. The enzyme catalyses tRNA(Ile) + L-isoleucine + ATP = L-isoleucyl-tRNA(Ile) + AMP + diphosphate. Catalyzes the attachment of isoleucine to tRNA(Ile). As IleRS can inadvertently accommodate and process structurally similar amino acids such as valine, to avoid such errors it has two additional distinct tRNA(Ile)-dependent editing activities. One activity is designated as 'pretransfer' editing and involves the hydrolysis of activated Val-AMP. The other activity is designated 'posttransfer' editing and involves deacylation of mischarged Val-tRNA(Ile). The sequence is that of Isoleucine--tRNA ligase from Thioalkalivibrio sulfidiphilus (strain HL-EbGR7).